A 470-amino-acid chain; its full sequence is Siroheme synthase (470 aa).

Residues 1–213 form a precorrin-2 dehydrogenase /sirohydrochlorin ferrochelatase region; it reads MSDATDPGWF…GEHAAARQVL (213 aa). Residues 28 to 29 and 49 to 50 each bind NAD(+); these read GI and PR. The segment at 224–470 is uroporphyrinogen-III C-methyltransferase; it reads GEVWLVGAGP…VVTPPPLSGT (247 aa). Pro-233 is an S-adenosyl-L-methionine binding site. Asp-256 functions as the Proton acceptor in the catalytic mechanism. Lys-278 (proton donor) is an active-site residue. S-adenosyl-L-methionine-binding positions include 309–311, Ile-314, 339–340, Met-392, and Gly-421; these read GGD and TA.

It in the N-terminal section; belongs to the precorrin-2 dehydrogenase / sirohydrochlorin ferrochelatase family. The protein in the C-terminal section; belongs to the precorrin methyltransferase family.

The enzyme catalyses uroporphyrinogen III + 2 S-adenosyl-L-methionine = precorrin-2 + 2 S-adenosyl-L-homocysteine + H(+). It catalyses the reaction precorrin-2 + NAD(+) = sirohydrochlorin + NADH + 2 H(+). The catalysed reaction is siroheme + 2 H(+) = sirohydrochlorin + Fe(2+). It participates in cofactor biosynthesis; adenosylcobalamin biosynthesis; precorrin-2 from uroporphyrinogen III: step 1/1. The protein operates within cofactor biosynthesis; adenosylcobalamin biosynthesis; sirohydrochlorin from precorrin-2: step 1/1. It functions in the pathway porphyrin-containing compound metabolism; siroheme biosynthesis; precorrin-2 from uroporphyrinogen III: step 1/1. Its pathway is porphyrin-containing compound metabolism; siroheme biosynthesis; siroheme from sirohydrochlorin: step 1/1. It participates in porphyrin-containing compound metabolism; siroheme biosynthesis; sirohydrochlorin from precorrin-2: step 1/1. In terms of biological role, multifunctional enzyme that catalyzes the SAM-dependent methylations of uroporphyrinogen III at position C-2 and C-7 to form precorrin-2 via precorrin-1. Then it catalyzes the NAD-dependent ring dehydrogenation of precorrin-2 to yield sirohydrochlorin. Finally, it catalyzes the ferrochelation of sirohydrochlorin to yield siroheme. In Gluconacetobacter diazotrophicus (strain ATCC 49037 / DSM 5601 / CCUG 37298 / CIP 103539 / LMG 7603 / PAl5), this protein is Siroheme synthase.